The sequence spans 267 residues: Hydroxyethylthiazole kinase (267 aa).

Residue M51 participates in substrate binding. Positions 127 and 173 each coordinate ATP. A200 contributes to the substrate binding site.

Belongs to the Thz kinase family. The cofactor is Mg(2+).

The enzyme catalyses 5-(2-hydroxyethyl)-4-methylthiazole + ATP = 4-methyl-5-(2-phosphooxyethyl)-thiazole + ADP + H(+). Its pathway is cofactor biosynthesis; thiamine diphosphate biosynthesis; 4-methyl-5-(2-phosphoethyl)-thiazole from 5-(2-hydroxyethyl)-4-methylthiazole: step 1/1. Functionally, catalyzes the phosphorylation of the hydroxyl group of 4-methyl-5-beta-hydroxyethylthiazole (THZ). The protein is Hydroxyethylthiazole kinase of Psychromonas ingrahamii (strain DSM 17664 / CCUG 51855 / 37).